The primary structure comprises 216 residues: Refilin-B (216 aa).

The interval 1–55 (MVGRLSLQDVPELVDTKKKGDGVLDSPDSGLPPSPSPSHWGLAATAGGGGERAPV) is disordered. Residues Ser6 and Ser26 each carry the phosphoserine modification.

This sequence belongs to the Refilin family. In terms of assembly, interacts with FLNA and FLNB. In terms of tissue distribution, detected in various tissues, with highest expression in lung, followed by spleen.

It is found in the cytoplasm. It localises to the cytoskeleton. Functionally, involved in the regulation of the perinuclear actin network and nuclear shape through interaction with filamins. Plays an essential role in the formation of cartilaginous skeletal elements. The sequence is that of Refilin-B from Mus musculus (Mouse).